A 214-amino-acid chain; its full sequence is LexA repressor (214 aa).

The segment at residues 26-46 (VREIGEAVGLSSSSTVHSYLK) is a DNA-binding region (H-T-H motif). Active-site for autocatalytic cleavage activity residues include Ser-138 and Lys-175.

It belongs to the peptidase S24 family. Homodimer.

The enzyme catalyses Hydrolysis of Ala-|-Gly bond in repressor LexA.. Represses a number of genes involved in the response to DNA damage (SOS response), including recA and lexA. In the presence of single-stranded DNA, RecA interacts with LexA causing an autocatalytic cleavage which disrupts the DNA-binding part of LexA, leading to derepression of the SOS regulon and eventually DNA repair. The protein is LexA repressor of Desulforamulus reducens (strain ATCC BAA-1160 / DSM 100696 / MI-1) (Desulfotomaculum reducens).